The following is a 183-amino-acid chain: Peptide deformylase-like (183 aa).

The active site involves E140.

Belongs to the polypeptide deformylase family.

This is Peptide deformylase-like from Rickettsia conorii (strain ATCC VR-613 / Malish 7).